Reading from the N-terminus, the 415-residue chain is MEQIPFVSSAPNTLGIELELQLINPRSFDLAAAADELLAQMANHPIADRVKPEITRSMIELNSSVHEHPMGLLAEMREMRDALCDAADAVGVSVAGGGAHPFMRWQERAISDSPRFQYLAEMYGYLARQFTVFGQHIHLGVPSGDAAVRMVRGLSPYVPHFIALSASSPYYEGVDTLFSCCRLNAVSSFPLAGHLPADVTDWYRFEAHIAQLRACGLAESIKDLYWDIRPKPEFGTVEIRVCDTPLTVERACQLAAFAQALAVLVTREPEPAPAAWLAYRSNHFQACRFGLQGSYVTPDGQRLRLIDHLRALFQRLMPIADELGTGDMLVALRDESIRNGNDARWLRSQFHRLRDLPLVVESMTHAWRGERETAGAAAEVPRRRIRATSEPVHGVQALATPEAGVTPGWRPDRLH.

The protein belongs to the glutamate--cysteine ligase type 2 family. YbdK subfamily.

It catalyses the reaction L-cysteine + L-glutamate + ATP = gamma-L-glutamyl-L-cysteine + ADP + phosphate + H(+). In terms of biological role, ATP-dependent carboxylate-amine ligase which exhibits weak glutamate--cysteine ligase activity. In Bordetella petrii (strain ATCC BAA-461 / DSM 12804 / CCUG 43448), this protein is Putative glutamate--cysteine ligase 2.